A 188-amino-acid chain; its full sequence is MNLSATILLAFGMSMDAFAASIGKGATLHKPKFSEAVRTGLIFGVIETLTPLVGWGLGMLASQFVLEWNHWIAFILLVFLGGRMIVEGVRGDSDEACDAPRRHGFWLLVTTAFATSLDAMAVGVGLAFLQVSIVTTALAIGCATFLMSTLGIMVGRFIGPLLGKRAEILGGIVLIGIGSEILWSHFAG.

6 helical membrane passes run 3–23 (LSATILLAFGMSMDAFAASIG), 41–61 (LIFGVIETLTPLVGWGLGMLA), 62–82 (SQFVLEWNHWIAFILLVFLGG), 107–129 (LLVTTAFATSLDAMAVGVGLAFL), 143–163 (ATFLMSTLGIMVGRFIGPLLG), and 168–188 (ILGGIVLIGIGSEILWSHFAG).

The protein belongs to the MntP (TC 9.B.29) family.

The protein resides in the cell inner membrane. Functionally, probably functions as a manganese efflux pump. The sequence is that of Putative manganese efflux pump MntP from Klebsiella pneumoniae (strain 342).